A 475-amino-acid polypeptide reads, in one-letter code: Proton-coupled amino acid transporter 1 (475 aa).

Residues 1-15 show a composition bias toward basic and acidic residues; the sequence is MSTQRLRNEDYHDYS. Positions 1 to 32 are disordered; that stretch reads MSTQRLRNEDYHDYSSTDVSPEESPSEGLGSF. Over 1–50 the chain is Cytoplasmic; that stretch reads MSTQRLRNEDYHDYSSTDVSPEESPSEGLGSFSPGSYQRLGENSSMTWFQ. A helical transmembrane segment spans residues 51-71; it reads TLIHLLKGNIGTGLLGLPLAV. Topologically, residues 72 to 77 are extracellular; it reads KNAGLL. A helical transmembrane segment spans residues 78 to 98; the sequence is LGPLSLLVIGIVAVHCMGILV. Residues 99–140 are Cytoplasmic-facing; sequence KCAHHLCRRLNKPFLDYGDTVMYGLECSPSTWIRNHSHWGRR. Residues 141–161 traverse the membrane as a helical segment; the sequence is IVDFFLVVTQLGFCCVYFVFL. At 162 to 189 the chain is on the extracellular side; that stretch reads ADNFKQVIEAANGTTTNCNNNETVILTP. Residues N173 and N182 are each glycosylated (N-linked (GlcNAc...) asparagine). Residues C179 and C328 are joined by a disulfide bond. The chain crosses the membrane as a helical span at residues 190-210; the sequence is TMDSRLYMLTFLPFLVLLSFI. Topologically, residues 211–214 are cytoplasmic; that stretch reads RNLR. A helical transmembrane segment spans residues 215-235; sequence ILSIFSLLANISMFVSLIMIY. At 236–256 the chain is on the extracellular side; sequence QFIVQRIPDPSHLPLVAPWKT. A helical membrane pass occupies residues 257–277; it reads YPLFFGTAIFAFEGIGVVLPL. The Cytoplasmic segment spans residues 278–288; that stretch reads ENKMKDSQKFP. Residues 289–309 form a helical membrane-spanning segment; sequence LILYLGMAIITVLYISLGSLG. At 310–341 the chain is on the extracellular side; sequence YLQFGADIKGSITLNLPNCWLYQSVKLLYSIG. The helical transmembrane segment at 342–362 threads the bilayer; that stretch reads IFFTYALQFYVAAEIIIPAIV. Residues 363 to 371 lie on the Cytoplasmic side of the membrane; sequence SRVPERFEL. A helical membrane pass occupies residues 372 to 392; the sequence is VVDLSARTAMVCVTCVLAVLI. Residues 393 to 396 lie on the Extracellular side of the membrane; that stretch reads PRLD. A helical transmembrane segment spans residues 397–417; sequence LVISLVGSVSSSALALIIPPL. Topologically, residues 418–438 are cytoplasmic; that stretch reads LEVTTYYGEGISPLTITKDAL. Residues 439-459 traverse the membrane as a helical segment; the sequence is ISILGFVGFVVGTYESLWELI. The Extracellular portion of the chain corresponds to 460–475; it reads QPSHSDSSTNSTSAFI. The N-linked (GlcNAc...) asparagine glycan is linked to N469.

It belongs to the amino acid/polyamine transporter 2 family. In terms of tissue distribution, widely expressed and predominantly expressed in brain. Within the brain, expression restricted to neurons and not detected in glial cells. Abundant in regions rich in neurons using glutamate and GABA such as Purkinje cells in the cerebellum and pyramidal cells in the hippocampus.

It is found in the cell membrane. The protein resides in the apical cell membrane. The protein localises to the lysosome membrane. It carries out the reaction glycine(in) + H(+)(in) = glycine(out) + H(+)(out). The catalysed reaction is L-proline(out) + H(+)(out) = L-proline(in) + H(+)(in). The enzyme catalyses D-proline(out) + H(+)(out) = D-proline(in) + H(+)(in). It catalyses the reaction L-alanine(in) + H(+)(in) = L-alanine(out) + H(+)(out). It carries out the reaction D-alanine(in) + H(+)(in) = D-alanine(out) + H(+)(out). The catalysed reaction is L-serine(in) + H(+)(in) = L-serine(out) + H(+)(out). The enzyme catalyses D-serine(out) + H(+)(out) = D-serine(in) + H(+)(in). It catalyses the reaction 4-aminobutanoate(in) + H(+)(in) = 4-aminobutanoate(out) + H(+)(out). It carries out the reaction beta-alanine(in) + H(+)(in) = beta-alanine(out) + H(+)(out). Functionally, electrogenic proton/amino acid symporter with selectivity for small apolar L-amino acids, their D-enantiomers and selected amino acid derivatives such as 4-aminobutanoate/GABA. May be involved in the efflux from the lysosomal compartment of neutral amino acids resulting from proteolysis. May play a role in specifying sites for exocytosis in neurons. This chain is Proton-coupled amino acid transporter 1, found in Rattus norvegicus (Rat).